The chain runs to 654 residues: MTQITERELKKKYLDLLSQRFDTPEKLATEIINLESILELPKGTEHFVSDLHGEYEAFQHVLRNGSGNVRAKINDIFKDKLSTKELNDLTALVYYPEDKLQLIKCDFQNYGQLNVWYITTIEHLIQLIKYCSSKYTRSKLRRALPEQYVFIVEELLYKNNEFKNKKSYYETLVNQVIELKQADDLIIGLAYSVQRLVVDHLHVVGDIYDRGPQPDKIMDTLINYHSLDIQWGNHDVLWVGAYAGSKVCLANLLRICARYDNLDIVEDAYGINLRPLLTLAEKYYDADNPAFKPKKRPDKHERLTQREESQITKIHQAIAMIQFKLEIPVIKRRPNFEMDERLVLEKVNYDTNEITVYRKTYPLKDTCFQTVNRDNPAELLPEEEEVMNKLLLSFQQSEKLRRHMSFLMRKGSLYLPCNGNLLIHGCIPVDENGEMESFEIDGQTYSGQELLDVFEYHVRKSFDEKENTDDLSTDLVWYLWTGKYSSLFGKRAMTTFERYFIADKASHKEEKNPYYHLREDVNMVRKMLSDFGLNPDEGRIINGHTPVKEINGEDPIKADGKMLVIDGGFSKAYQSTTGIAGYTLLYNSFGMQLVAHQQFNAKEKILSEGIEELSIKRIVDKELQRKKIRNTNKGKELQAQIDILKMLMHDRYLD.

The segment at 288–307 is disordered; that stretch reads NPAFKPKKRPDKHERLTQRE. Over residues 298–307 the composition is skewed to basic and acidic residues; the sequence is DKHERLTQRE.

The protein belongs to the FBPase class 3 family. The cofactor is Mn(2+).

The catalysed reaction is beta-D-fructose 1,6-bisphosphate + H2O = beta-D-fructose 6-phosphate + phosphate. Its pathway is carbohydrate biosynthesis; gluconeogenesis. The polypeptide is Fructose-1,6-bisphosphatase class 3 (Staphylococcus aureus (strain bovine RF122 / ET3-1)).